We begin with the raw amino-acid sequence, 22 residues long: Sex pheromone inhibitor determinant (22 aa).

The propeptide occupies 1–14; sequence MSKRAMKKIIPLIT.

The protein resides in the secreted. Functionally, acts as a competitive inhibitor of the CAD1 pheromone. The chain is Sex pheromone inhibitor determinant (iad) from Enterococcus faecalis (strain ATCC 700802 / V583).